Consider the following 491-residue polypeptide: bZIP transcription factor hapX (491 aa).

Residues 19–73 (AKPAISPSPGPGTPGSITSKEWVIPPRPKPGRKPATDTPPTKRKAQNRAAQRAFR) are disordered. One can recognise a bZIP domain in the interval 55 to 95 (DTPPTKRKAQNRAAQRAFRERRAARVNELEEQIKKIEDEHE). Residues 60–79 (KRKAQNRAAQRAFRERRAAR) form a basic motif region. The interval 83–90 (LEEQIKKI) is leucine-zipper. The span at 149 to 161 (SSLSDREAVRSDK) shows a compositional bias: basic and acidic residues. Disordered regions lie at residues 149–196 (SSLS…REEV), 224–245 (EQSR…KPDP), and 397–416 (VSRG…SAAP). A compositionally biased stretch (low complexity) spans 397–413 (VSRGRSGSNNNTSSGSS).

The protein belongs to the bZIP family. YAP subfamily.

It is found in the nucleus. In terms of biological role, transcription factor required for repression of genes during iron starvation. Represses iron-dependent and mitochondrial-localized activities including respiration, TCA cycle, amino acid metabolism, iron-sulfur-cluster and heme biosynthesis. Iron starvation causes a massive remodeling of the amino acid pool and hapX is essential for the coordination of the production of siderophores and their precursor ornithine. The chain is bZIP transcription factor hapX from Aspergillus fumigatus (strain ATCC MYA-4609 / CBS 101355 / FGSC A1100 / Af293) (Neosartorya fumigata).